Reading from the N-terminus, the 629-residue chain is Putative polypeptide N-acetylgalactosaminyltransferase 10 (629 aa).

The Cytoplasmic portion of the chain corresponds to M1–H12. Residues W13 to V33 traverse the membrane as a helical; Signal-anchor for type II membrane protein segment. The Lumenal segment spans residues S34–E629. 2 N-linked (GlcNAc...) asparagine glycosylation sites follow: N143 and N177. 5 cysteine pairs are disulfide-bonded: C154-C385, C376-C454, C493-C510, C539-C556, and C582-C598. The tract at residues L163–P275 is catalytic subdomain A. Positions 204 and 236 each coordinate substrate. Mn(2+) is bound by residues D259 and H261. The segment at P331–R393 is catalytic subdomain B. W362 provides a ligand contact to substrate. Mn(2+) is bound at residue H390. R393 is a substrate binding site. The tract at residues R393 to D406 is flexible loop. In terms of domain architecture, Ricin B-type lectin spans T526–E629.

Belongs to the glycosyltransferase 2 family. GalNAc-T subfamily. Requires Mn(2+) as cofactor.

The protein resides in the golgi apparatus membrane. It carries out the reaction L-seryl-[protein] + UDP-N-acetyl-alpha-D-galactosamine = a 3-O-[N-acetyl-alpha-D-galactosaminyl]-L-seryl-[protein] + UDP + H(+). The enzyme catalyses L-threonyl-[protein] + UDP-N-acetyl-alpha-D-galactosamine = a 3-O-[N-acetyl-alpha-D-galactosaminyl]-L-threonyl-[protein] + UDP + H(+). The protein operates within protein modification; protein glycosylation. Functionally, may catalyze the initial reaction in O-linked oligosaccharide biosynthesis, the transfer of an N-acetyl-D-galactosamine residue to a serine or threonine residue on the protein receptor. This Caenorhabditis briggsae protein is Putative polypeptide N-acetylgalactosaminyltransferase 10.